Here is a 635-residue protein sequence, read N- to C-terminus: Sodium- and chloride-dependent creatine transporter 1 (635 aa).

The tract at residues 1–35 (MAKKSAENGIYSVSGDEKKGPLIAPGPDGAPAKGD) is disordered. Residues 1-60 (MAKKSAENGIYSVSGDEKKGPLIAPGPDGAPAKGDGPAGLGAPGGCLAVPPRETWTRQMD) are Cytoplasmic-facing. Over residues 25 to 35 (PGPDGAPAKGD) the composition is skewed to low complexity. The chain crosses the membrane as a helical span at residues 61–81 (FIMSCVGFAVGLGNVWRFPYL). Residues 82-87 (CYKNGG) are Extracellular-facing. The helical transmembrane segment at 88 to 108 (GVFLIPYVLIALVGGIPIFFL) threads the bilayer. Over 109–138 (EISLGQFMKAGSINVWNICPLFKGLGYASM) the chain is Cytoplasmic. The helical transmembrane segment at 139–159 (VIVFYCNTYYIMVLAWGFYYL) threads the bilayer. At 160–230 (VKSFTTTLPW…LSGGLEVPGA (71 aa)) the chain is on the extracellular side. N-linked (GlcNAc...) asparagine glycosylation is found at Asn192 and Asn197. The helical transmembrane segment at 231 to 251 (LNSEVTLCLLACWVLVYFCVW) threads the bilayer. Residues 252–269 (KGVKSTGKIVYFTATFPY) lie on the Cytoplasmic side of the membrane. The chain crosses the membrane as a helical span at residues 270–290 (VVLVVLLVRGVLLPGALDGII). Topologically, residues 291 to 304 (YYLKPDWSKLRSPQ) are extracellular. The helical transmembrane segment at 305–325 (VWIDAGTQIFFSYAIGLGALT) threads the bilayer. Residues 326-341 (ALGSYNRFNNNCYKDA) lie on the Cytoplasmic side of the membrane. Residues 342 to 362 (IILALINSGTSFFAGFVVFSI) traverse the membrane as a helical segment. The Extracellular portion of the chain corresponds to 363 to 394 (LGFMATEQGVHISKVAESGPGLAFIAYPRAVT). The chain crosses the membrane as a helical span at residues 395–415 (LMPVAPLWAALFFFMLLLLGL). The Cytoplasmic portion of the chain corresponds to 416–444 (DSQFVGVEGFITGLLDLLPASYYFRFQRE). Residues 445-465 (ISVALCCALCFVIDLSMVQMA) form a helical membrane-spanning segment. Topologically, residues 466-479 (GMYVFQLFDYYSAS) are extracellular. Residues 480 to 500 (GTTLLWQAFWECVAVAWVYGA) traverse the membrane as a helical segment. Residues 501-520 (DRFMDDIACMIGYRPCPWMK) lie on the Cytoplasmic side of the membrane. Residues 521–541 (WCWSFFTPLVCMGIFIFNIVY) traverse the membrane as a helical segment. Residues 542 to 560 (YKPLVYNKTYVYPWWGEAM) lie on the Extracellular side of the membrane. Residue Asn548 is glycosylated (N-linked (GlcNAc...) asparagine). Residues 561 to 581 (GWAFALSSMLCVPLHLLGCLL) traverse the membrane as a helical segment. The Cytoplasmic segment spans residues 582-635 (RAKGTMAERWQHLTQPVWGLHHLEYRAQDADVRGLTTLTPVSESSKVVVVESVM). A phosphothreonine mark is found at Thr617 and Thr620. Phosphoserine is present on Ser623.

This sequence belongs to the sodium:neurotransmitter symporter (SNF) (TC 2.A.22) family. SLC6A8 subfamily. Post-translationally, glycosylated. Prominent in kidney, heart, and muscle, also present in brain, but not in liver and intestine.

It localises to the cell membrane. The protein resides in the apical cell membrane. It carries out the reaction creatine(out) + chloride(out) + 2 Na(+)(out) = creatine(in) + chloride(in) + 2 Na(+)(in). Its function is as follows. Creatine:sodium symporter which mediates the uptake of creatine. Plays an important role in supplying creatine to the brain via the blood-brain barrier. The sequence is that of Sodium- and chloride-dependent creatine transporter 1 (SLC6A8) from Oryctolagus cuniculus (Rabbit).